Here is a 63-residue protein sequence, read N- to C-terminus: Large ribosomal subunit protein uL29 (63 aa).

This sequence belongs to the universal ribosomal protein uL29 family.

The sequence is that of Large ribosomal subunit protein uL29 from Shewanella halifaxensis (strain HAW-EB4).